Consider the following 131-residue polypeptide: Fluoride-specific ion channel FluC (131 aa).

The next 3 helical transmembrane spans lie at 3–23 (AAAN…GAWL), 34–54 (IFLT…LLMG), and 62–82 (AVPA…LGGL). G80 and T83 together coordinate Na(+). The helical transmembrane segment at 101 to 121 (WGWLALHAAVHVAGSLLMAWI) threads the bilayer.

This sequence belongs to the fluoride channel Fluc/FEX (TC 1.A.43) family.

It is found in the cell inner membrane. The catalysed reaction is fluoride(in) = fluoride(out). Na(+) is not transported, but it plays an essential structural role and its presence is essential for fluoride channel function. In terms of biological role, fluoride-specific ion channel. Important for reducing fluoride concentration in the cell, thus reducing its toxicity. This is Fluoride-specific ion channel FluC from Aromatoleum aromaticum (strain DSM 19018 / LMG 30748 / EbN1) (Azoarcus sp. (strain EbN1)).